A 551-amino-acid polypeptide reads, in one-letter code: Glucans biosynthesis protein D (551 aa).

The tat-type signal signal peptide spans 1-32 (MNRRRFIKGSMAMAAVCGSSGIASLFSQAAFA).

Belongs to the OpgD/OpgG family. In terms of processing, predicted to be exported by the Tat system. The position of the signal peptide cleavage has not been experimentally proven.

Its subcellular location is the periplasm. It participates in glycan metabolism; osmoregulated periplasmic glucan (OPG) biosynthesis. Its function is as follows. Probably involved in the control of the structural glucose backbone of osmoregulated periplasmic glucans (OPGs). This is Glucans biosynthesis protein D from Salmonella enteritidis PT4 (strain P125109).